Here is a 442-residue protein sequence, read N- to C-terminus: Kelch domain-containing protein 10 (442 aa).

Positions 1-57 (MSAAQGWDRNRRRGGGAAGAGGGGSGAGGGSGGSGGRGTGQLNRFVQLSGRPHLPGK) are disordered. An Omega-N-methylarginine modification is found at arginine 13. The segment covering 15–39 (GGAAGAGGGGSGAGGGSGGSGGRGT) has biased composition (gly residues). 6 Kelch repeats span residues 87-154 (RPPP…PREL), 155-198 (ASMS…ALLS), 199-260 (CRGK…PEER), 261-319 (YRHE…RRCH), 320-364 (SCVQ…PEPV), and 365-403 (YFHC…LVVP). The interval 401–442 (VVPSLLELAWEKLLAAFPNLANLSRTQLLHLGLTQGLIERLK) is interaction with CUL2.

Belongs to the KLHDC10 family. In terms of assembly, component of a CRL2 E3 ubiquitin-protein ligase complex, also named ECS (Elongin BC-CUL2/5-SOCS-box protein) complex, composed of CUL2, Elongin BC (ELOB and ELOC), RBX1 and substrate-specific adapter KLHDC10. Interacts (via the 6 Kelch repeats) with PPP5C.

Its subcellular location is the nucleus. The protein localises to the cytoplasm. It functions in the pathway protein modification; protein ubiquitination. In terms of biological role, substrate-recognition component of a Cul2-RING (CRL2) E3 ubiquitin-protein ligase complex of the DesCEND (destruction via C-end degrons) pathway, which recognizes a C-degron located at the extreme C-terminus of target proteins, leading to their ubiquitination and degradation. The C-degron recognized by the DesCEND pathway is usually a motif of less than ten residues and can be present in full-length proteins, truncated proteins or proteolytically cleaved forms. The CRL2(KLHDC10) complex specifically recognizes proteins with a proline-glycine (Pro-Gly) or an alanine tail (CAT tail) at the C-terminus, leading to their ubiquitination and degradation. The CRL2(KLHDC10) complex is involved in the ribosome-associated quality control (RQC) pathway, which mediates the extraction of incompletely synthesized nascent chains from stalled ribosomes: CRL2(KLHDC10) acts downstream of NEMF and recognizes CAT tails associated with stalled nascent chains, leading to their ubiquitination and degradation. Participates in the oxidative stress-induced cell death through MAP3K5 activation. Inhibits PPP5C phosphatase activity on MAP3K5. Acts as a regulator of necroptosis. The protein is Kelch domain-containing protein 10 of Homo sapiens (Human).